Here is a 428-residue protein sequence, read N- to C-terminus: uncharacterized protein (428 aa).

A Zn(2+)-binding site is contributed by histidine 68. Glutamate 71 (proton acceptor) is an active-site residue. The Zn(2+) site is built by histidine 72 and glutamate 143.

Belongs to the peptidase M16 family. It depends on Zn(2+) as a cofactor.

This is an uncharacterized protein from Bacillus subtilis (strain 168).